The primary structure comprises 542 residues: Bifunctional pantoate ligase/cytidylate kinase (542 aa).

The tract at residues 1–280 is pantoate--beta-alanine ligase; sequence MHWLRTVAAL…VGQTRLIDNL (280 aa). 28 to 35 is a binding site for ATP; the sequence is MGSLHEGH. His35 serves as the catalytic Proton donor. Gln59 serves as a coordination point for (R)-pantoate. Residue Gln59 coordinates beta-alanine. 150–153 contributes to the ATP binding site; that stretch reads GQKD. Gln156 serves as a coordination point for (R)-pantoate. Residues Val179 and 187–190 each bind ATP; that span reads CSSR. The cytidylate kinase stretch occupies residues 281-542; sequence LLSPEQGDPL…ERSGPARLDQ (262 aa). The segment at 287-311 is disordered; that stretch reads GDPLPERVQHAAPPSSGTTSPPRRP.

This sequence in the N-terminal section; belongs to the pantothenate synthetase family. It in the C-terminal section; belongs to the cytidylate kinase family. Type 1 subfamily.

Its subcellular location is the cytoplasm. It carries out the reaction (R)-pantoate + beta-alanine + ATP = (R)-pantothenate + AMP + diphosphate + H(+). It catalyses the reaction CMP + ATP = CDP + ADP. The catalysed reaction is dCMP + ATP = dCDP + ADP. It participates in cofactor biosynthesis; (R)-pantothenate biosynthesis; (R)-pantothenate from (R)-pantoate and beta-alanine: step 1/1. In terms of biological role, catalyzes the condensation of pantoate with beta-alanine in an ATP-dependent reaction via a pantoyl-adenylate intermediate. Its function is as follows. Catalyzes the transfer of a phosphate group from ATP to either CMP or dCMP to form CDP or dCDP and ADP, respectively. This Synechococcus sp. (strain JA-2-3B'a(2-13)) (Cyanobacteria bacterium Yellowstone B-Prime) protein is Bifunctional pantoate ligase/cytidylate kinase.